The following is a 210-amino-acid chain: Large ribosomal subunit protein uL3 (210 aa).

It belongs to the universal ribosomal protein uL3 family. As to quaternary structure, part of the 50S ribosomal subunit. Forms a cluster with proteins L14 and L19.

One of the primary rRNA binding proteins, it binds directly near the 3'-end of the 23S rRNA, where it nucleates assembly of the 50S subunit. The sequence is that of Large ribosomal subunit protein uL3 from Pediococcus pentosaceus (strain ATCC 25745 / CCUG 21536 / LMG 10740 / 183-1w).